The primary structure comprises 231 residues: Large ribosomal subunit protein uL1 (231 aa).

This sequence belongs to the universal ribosomal protein uL1 family. As to quaternary structure, part of the 50S ribosomal subunit.

In terms of biological role, binds directly to 23S rRNA. The L1 stalk is quite mobile in the ribosome, and is involved in E site tRNA release. Functionally, protein L1 is also a translational repressor protein, it controls the translation of the L11 operon by binding to its mRNA. The sequence is that of Large ribosomal subunit protein uL1 from Moorella thermoacetica (strain ATCC 39073 / JCM 9320).